The following is a 265-amino-acid chain: tRNA pseudouridine synthase A (265 aa).

The active-site Nucleophile is D52. Y110 is a binding site for substrate. Residues 244–265 (FYRDGPPARTPGGTTDAEEDEG) are disordered.

This sequence belongs to the tRNA pseudouridine synthase TruA family. As to quaternary structure, homodimer.

It catalyses the reaction uridine(38/39/40) in tRNA = pseudouridine(38/39/40) in tRNA. Its function is as follows. Formation of pseudouridine at positions 38, 39 and 40 in the anticodon stem and loop of transfer RNAs. The polypeptide is tRNA pseudouridine synthase A (Myxococcus xanthus).